The following is a 250-amino-acid chain: tRNA pseudouridine synthase A (250 aa).

Aspartate 52 functions as the Nucleophile in the catalytic mechanism. Position 111 (tyrosine 111) interacts with substrate.

Belongs to the tRNA pseudouridine synthase TruA family. In terms of assembly, homodimer.

It catalyses the reaction uridine(38/39/40) in tRNA = pseudouridine(38/39/40) in tRNA. Functionally, formation of pseudouridine at positions 38, 39 and 40 in the anticodon stem and loop of transfer RNAs. This Methylorubrum extorquens (strain PA1) (Methylobacterium extorquens) protein is tRNA pseudouridine synthase A.